The primary structure comprises 769 residues: Glutathione biosynthesis bifunctional protein GshAB (769 aa).

The interval 1–347 (MLDSFKEDPN…QLADENENNI (347 aa)) is glutamate--cysteine ligase. The ATP-grasp domain maps to 514–768 (KLVLAEHDIR…IGDKILDFLF (255 aa)). ATP is bound at residue 541-599 (SLFEDKQIVVKPKSTNYGWGISIFKNKFTLEDYQEALNIAFSYDSSVIIEEFIPGDEFR). Asp-721, Glu-738, and Asn-740 together coordinate Mg(2+). Positions 721, 738, and 740 each coordinate Mn(2+).

This sequence in the N-terminal section; belongs to the glutamate--cysteine ligase type 1 family. Type 2 subfamily. As to quaternary structure, monomer. Requires Mg(2+) as cofactor. The cofactor is Mn(2+).

The enzyme catalyses L-cysteine + L-glutamate + ATP = gamma-L-glutamyl-L-cysteine + ADP + phosphate + H(+). It catalyses the reaction gamma-L-glutamyl-L-cysteine + glycine + ATP = glutathione + ADP + phosphate + H(+). It participates in sulfur metabolism; glutathione biosynthesis; glutathione from L-cysteine and L-glutamate: step 1/2. Its pathway is sulfur metabolism; glutathione biosynthesis; glutathione from L-cysteine and L-glutamate: step 2/2. Its function is as follows. Synthesizes glutathione from L-glutamate and L-cysteine via gamma-L-glutamyl-L-cysteine. The sequence is that of Glutathione biosynthesis bifunctional protein GshAB from Listeria monocytogenes serovar 1/2a (strain ATCC BAA-679 / EGD-e).